Consider the following 156-residue polypeptide: Oxidized purine nucleoside triphosphate hydrolase (156 aa).

In terms of domain architecture, Nudix hydrolase spans 3-132 (TSRLYTLVLV…WFPLLLQKKK (130 aa)). Threonine 8 lines the 2-oxo-dATP pocket. 8-oxo-dGTP-binding positions include threonine 8, lysine 23, asparagine 33, 35–38 (FGGK), and glutamate 52. 2-oxo-dATP-binding positions include asparagine 33 and 35-38 (FGGK). Mg(2+)-binding residues include glycine 36, glutamate 52, glutamate 55, glutamate 56, and glutamate 100. The short motif at 37 to 58 (GKVQEGETIEDGAKRELLEESG) is the Nudix box element. Residues glutamate 56, glutamate 100, and 117 to 120 (WPDD) each bind 8-oxo-dGTP. 2-oxo-dATP is bound at residue 117–120 (WPDD).

The protein belongs to the Nudix hydrolase family. In terms of assembly, monomer. Requires Mg(2+) as cofactor. High expression levels detected in thymus, liver, spleen, kidney, testis and large intestine, with lower levels detected in brain, heart, lung and stomach (at protein level). Expressed in kidney, liver and small intestine.

It localises to the cytoplasm. The protein resides in the nucleus. The protein localises to the nucleus membrane. It is found in the cytoplasmic vesicle. Its subcellular location is the secretory vesicle. It localises to the acrosome. It carries out the reaction 2-oxo-dATP + H2O = 2-oxo-dAMP + diphosphate + H(+). It catalyses the reaction 2-oxo-ATP + H2O = 2-oxo-AMP + diphosphate + H(+). The enzyme catalyses 8-oxo-dGTP + H2O = 8-oxo-dGMP + diphosphate + H(+). The catalysed reaction is 8-oxo-dATP + H2O = 8-oxo-dAMP + diphosphate + H(+). It carries out the reaction O(6)-methyl-dGTP + H2O = O(6)-methyl-dGMP + diphosphate + H(+). It catalyses the reaction N(6)-methyl-dATP + H2O = N(6)-methyl-dAMP + diphosphate + H(+). The enzyme catalyses N(6)-methyl-ATP + H2O = N(6)-methyl-AMP + diphosphate + H(+). In terms of biological role, oxidized purine nucleoside triphosphate hydrolase which is a prominent sanitizer of the oxidized nucleotide pool. Catalyzes the hydrolysis of 2-oxo-dATP (2-hydroxy-dATP) into 2-oxo-dAMP. Also has a significant hydrolase activity toward 2-oxo-ATP, 8-oxo-dGTP and 8-oxo-dATP. Through the hydrolysis of oxidized purine nucleoside triphosphates, prevents their incorporation into DNA and the subsequent transversions A:T to C:G and G:C to T:A. Also catalyzes the hydrolysis of methylated purine nucleoside triphosphate preventing their integration into DNA. Through this antimutagenic activity protects cells from oxidative stress. The protein is Oxidized purine nucleoside triphosphate hydrolase (Nudt1) of Mus musculus (Mouse).